The chain runs to 460 residues: Bifunctional protein GlmU (460 aa).

The tract at residues 1-235 (MALSAAIILA…PLSVEGVNDR (235 aa)) is pyrophosphorylase. UDP-N-acetyl-alpha-D-glucosamine contacts are provided by residues 9–12 (LAAG), lysine 23, glutamine 76, and 81–82 (GT). Aspartate 109 provides a ligand contact to Mg(2+). Residues glycine 146, glutamate 161, asparagine 176, and asparagine 233 each contribute to the UDP-N-acetyl-alpha-D-glucosamine site. Residue asparagine 233 participates in Mg(2+) binding. The tract at residues 236–256 (VQLAALAKAHNKRVCEHWMRE) is linker. Residues 257–460 (GVTILDPDTT…VEGWKPEWER (204 aa)) are N-acetyltransferase. Residues arginine 338 and lysine 356 each contribute to the UDP-N-acetyl-alpha-D-glucosamine site. Catalysis depends on histidine 368, which acts as the Proton acceptor. The UDP-N-acetyl-alpha-D-glucosamine site is built by tyrosine 371 and asparagine 382. Residues 391 to 392 (NY) and alanine 428 contribute to the acetyl-CoA site.

It in the N-terminal section; belongs to the N-acetylglucosamine-1-phosphate uridyltransferase family. The protein in the C-terminal section; belongs to the transferase hexapeptide repeat family. Homotrimer. Requires Mg(2+) as cofactor.

Its subcellular location is the cytoplasm. The catalysed reaction is alpha-D-glucosamine 1-phosphate + acetyl-CoA = N-acetyl-alpha-D-glucosamine 1-phosphate + CoA + H(+). The enzyme catalyses N-acetyl-alpha-D-glucosamine 1-phosphate + UTP + H(+) = UDP-N-acetyl-alpha-D-glucosamine + diphosphate. It functions in the pathway nucleotide-sugar biosynthesis; UDP-N-acetyl-alpha-D-glucosamine biosynthesis; N-acetyl-alpha-D-glucosamine 1-phosphate from alpha-D-glucosamine 6-phosphate (route II): step 2/2. Its pathway is nucleotide-sugar biosynthesis; UDP-N-acetyl-alpha-D-glucosamine biosynthesis; UDP-N-acetyl-alpha-D-glucosamine from N-acetyl-alpha-D-glucosamine 1-phosphate: step 1/1. It participates in bacterial outer membrane biogenesis; LPS lipid A biosynthesis. In terms of biological role, catalyzes the last two sequential reactions in the de novo biosynthetic pathway for UDP-N-acetylglucosamine (UDP-GlcNAc). The C-terminal domain catalyzes the transfer of acetyl group from acetyl coenzyme A to glucosamine-1-phosphate (GlcN-1-P) to produce N-acetylglucosamine-1-phosphate (GlcNAc-1-P), which is converted into UDP-GlcNAc by the transfer of uridine 5-monophosphate (from uridine 5-triphosphate), a reaction catalyzed by the N-terminal domain. This chain is Bifunctional protein GlmU, found in Bifidobacterium adolescentis (strain ATCC 15703 / DSM 20083 / NCTC 11814 / E194a).